Reading from the N-terminus, the 206-residue chain is Ribonuclease HII (206 aa).

Residues 18–206 (GRVAGVDEVG…PVREWLEANS (189 aa)) enclose the RNase H type-2 domain. A divalent metal cation contacts are provided by D24, E25, and D116.

It belongs to the RNase HII family. Mn(2+) serves as cofactor. Requires Mg(2+) as cofactor.

It is found in the cytoplasm. It carries out the reaction Endonucleolytic cleavage to 5'-phosphomonoester.. Endonuclease that specifically degrades the RNA of RNA-DNA hybrids. The polypeptide is Ribonuclease HII (Shewanella amazonensis (strain ATCC BAA-1098 / SB2B)).